A 794-amino-acid polypeptide reads, in one-letter code: Signal transducer and activator of transcription 5A (794 aa).

Tyrosine 90 bears the Phosphotyrosine mark. A phosphoserine mark is found at serine 128 and serine 193. The region spanning 589-686 is the SH2 domain; the sequence is WNDGAILGFV…EVFSKYYTPV (98 aa). Tyrosine 682 carries the phosphotyrosine modification. Position 694 is a phosphotyrosine; by JAK2 (tyrosine 694). The interval 773-794 is disordered; that stretch reads DSLDSRLSPPAGLFTSARGSLS. Position 780 is a phosphoserine (serine 780).

It belongs to the transcription factor STAT family. In terms of assembly, forms a homodimer or a heterodimer with a related family member. Binds NR3C1. Interacts with NCOA1 and SOCS7. Interacts with ERBB4. Interacts with EBF4. Interacts with CD69. Tyrosine phosphorylated in response to KITLG/SCF, IL2, IL3, IL7, IL15, CSF2/GMCSF, GH1, PRL, EPO and THPO. Activated KIT promotes phosphorylation on tyrosine residues and subsequent translocation to the nucleus. Tyrosine phosphorylated in response to constitutively activated FGFR1, FGFR2, FGFR3 and FGFR4. Tyrosine phosphorylation is required for DNA-binding activity and dimerization. Serine phosphorylation is also required for maximal transcriptional activity. Tyrosine phosphorylated in response to signaling via activated FLT3; wild-type FLT3 results in much weaker phosphorylation than constitutively activated mutant FLT3. Alternatively, can be phosphorylated by JAK2 at Tyr-694. Post-translationally, ISGylated.

The protein resides in the cytoplasm. It localises to the nucleus. Carries out a dual function: signal transduction and activation of transcription. Mediates cellular responses to the cytokine KITLG/SCF and other growth factors. Mediates cellular responses to ERBB4. May mediate cellular responses to activated FGFR1, FGFR2, FGFR3 and FGFR4. Binds to the GAS element and activates PRL-induced transcription. Regulates the expression of milk proteins during lactation. In Homo sapiens (Human), this protein is Signal transducer and activator of transcription 5A (STAT5A).